The chain runs to 23 residues: TTPQEVLSRIKDQGIKLIDLKFI.

It belongs to the glutamine synthetase family. As to quaternary structure, oligomer of 12 subunits arranged in the form of two hexagons. It depends on Mg(2+) as a cofactor.

Its subcellular location is the cytoplasm. It carries out the reaction L-glutamate + NH4(+) + ATP = L-glutamine + ADP + phosphate + H(+). The activity of this enzyme could be controlled by adenylation under conditions of abundant glutamine. Involved in nitrogen metabolism via ammonium assimilation. Catalyzes the ATP-dependent biosynthesis of glutamine from glutamate and ammonia. This is Glutamine synthetase from Phormidium lapideum.